We begin with the raw amino-acid sequence, 342 residues long: Isopentenyl-diphosphate delta-isomerase (342 aa).

6–7 (RK) provides a ligand contact to substrate. FMN is bound by residues serine 63, 64–66 (SMT), serine 94, and asparagine 122. 94-96 (SMR) is a binding site for substrate. Glutamine 157 contacts substrate. Glutamate 158 is a binding site for Mg(2+). FMN contacts are provided by residues lysine 189, threonine 219, 269 to 271 (GLK), and 290 to 291 (AG).

This sequence belongs to the IPP isomerase type 2 family. As to quaternary structure, homooctamer. Dimer of tetramers. It depends on FMN as a cofactor. NADPH is required as a cofactor. Mg(2+) serves as cofactor.

The protein resides in the cytoplasm. It carries out the reaction isopentenyl diphosphate = dimethylallyl diphosphate. Its function is as follows. Involved in the biosynthesis of isoprenoids. Catalyzes the 1,3-allylic rearrangement of the homoallylic substrate isopentenyl (IPP) to its allylic isomer, dimethylallyl diphosphate (DMAPP). This is Isopentenyl-diphosphate delta-isomerase from Rickettsia bellii (strain RML369-C).